Reading from the N-terminus, the 606-residue chain is Kelch repeat and BTB domain-containing protein 8 (606 aa).

In terms of domain architecture, BTB spans 55–123 (TDIVVQVDHG…AYTSRVQLTE (69 aa)). Residues 158 to 258 (CIGVFSFADH…PLMEETFVEQ (101 aa)) form the BACK domain. Kelch repeat units follow at residues 342-396 (ELYI…HCCG), 397-447 (KLYA…EYKD), 449-487 (IYIL…VYKD), 488-534 (SIYY…KLVV), and 546-593 (TQVS…FECA).

Belongs to the KBTBD8 family. Component of the BCR(KBTBD8) E3 ubiquitin ligase complex.

Its subcellular location is the cytoplasm. The protein resides in the cytoskeleton. It is found in the spindle. It localises to the golgi apparatus. Substrate-specific adapter of a BCR (BTB-CUL3-RBX1) E3 ubiquitin ligase complex that acts as a regulator of neural crest specification. The BCR(KBTBD8) complex acts by mediating monoubiquitination of target proteins. In Xenopus tropicalis (Western clawed frog), this protein is Kelch repeat and BTB domain-containing protein 8 (kbtbd8).